A 2006-amino-acid chain; its full sequence is Supporter of activation of yellow protein (2006 aa).

Disordered regions lie at residues 1–208, 313–347, 458–564, 744–794, 821–916, 929–1029, 1044–1082, and 1099–1196; these read MNDL…RRVE, MPAK…SSLA, EEKP…AQSQ, DTQD…DPAR, DLEG…KSRR, VSVG…NNNS, CSSS…SDPL, and QQLR…SAVA. The span at 10-60 shows a compositional bias: low complexity; the sequence is VAATSSSGSESGTAVESAAATSTAGSAGAAGRPQSNCSANSNAKSVAASST. Positions 67–81 are enriched in polar residues; the sequence is VSSTSSPAQRDQQLN. Pro residues predominate over residues 118–128; it reads SPPPTLPPPTT. Over residues 129 to 168 the composition is skewed to low complexity; it reads PCDDAPSTTGASASASSASGEAPSAASAAGAAGGPMAATA. Polar residues predominate over residues 189-199; it reads ANPNSNANESQ. Residues 321 to 347 show a composition bias toward low complexity; the sequence is LSSLSPASASSSSASSSSSSSSSSSLA. A compositionally biased stretch (polar residues) spans 485–494; the sequence is GGESNSSSQE. Basic and acidic residues predominate over residues 525–534; that stretch reads SLSKEHDPKI. Residues 543–563 are compositionally biased toward low complexity; it reads ASNGIASGGSKASKASKSAQS. Over residues 744–758 the composition is skewed to basic and acidic residues; that stretch reads DTQDNNNENHLKRTN. Composition is skewed to polar residues over residues 759–769 and 828–844; these read SEGNESPSSRL and PPTQ…NGAL. Residues 861–870 are compositionally biased toward pro residues; it reads PATPQPPPVA. 2 stretches are compositionally biased toward basic and acidic residues: residues 936–945 and 963–972; these read ADMKAKEKES and ESPKTRDHRP. Low complexity-rich tracts occupy residues 978–990 and 1018–1029; these read RTTT…LQPT and SSESESNNNNNS. Residues 1053–1080 show a composition bias toward polar residues; the sequence is GAAANQQVIGGSGSSSMLPPTTILSSSD. Positions 1103-1112 are enriched in low complexity; that stretch reads SSRPSSISCG. The span at 1147-1158 shows a compositional bias: basic residues; the sequence is GRGRGRRSRGGR. The span at 1161-1173 shows a compositional bias: low complexity; the sequence is GSSSVDRAVSVGG. The tract at residues 1340–1573 is SAY; the sequence is MIQEQVALYL…PPTDLMAQLL (234 aa). Residues 1579 to 1685 form a disordered region; it reads AVGSDEIKTS…AGSEDEDGNE (107 aa). 2 stretches are compositionally biased toward low complexity: residues 1627–1652 and 1660–1677; these read TASS…SSDT and FSST…SGAG. Residues 1694–1751 form a PHD-type 1; degenerate zinc finger; it reads TCGVCLRSQHRNARDMPEAFIRCYTCRKRVHPSCVDMPPRMVGRVRNYNWQCAGCKCC. The PHD-type 2; degenerate zinc-finger motif lies at 1753-1796; that stretch reads KCRSSQRPGKMLYCEQCDRGYHIYCLGLRTVPDGRWSCERCCFC. The tract at residues 1887 to 1911 is disordered; sequence TSAQTDDSPMPSPGLTTNGGRALSP.

This sequence belongs to the SAYP family. Widely expressed. Highly expressed in ovary. Expressed in nursing cells and growing oocytes at all stages of development and accumulates in mature oocytes. Expressed in the nuclei of syncytium blastoderm of early embryos and in the nuclei of different tissues of late embryos, larvae, and adults.

The protein localises to the nucleus. The protein resides in the cytoplasm. It is found in the chromosome. In terms of biological role, essential transcription regulator during early development. Coactivates transcription of some euchromatin genes and repress transcription in of euchromatin genes translocated to heterochromatin. This is Supporter of activation of yellow protein (e(y)3) from Drosophila melanogaster (Fruit fly).